We begin with the raw amino-acid sequence, 307 residues long: Fructose-bisphosphate aldolase (307 aa).

D-glyceraldehyde 3-phosphate is bound at residue serine 49. Aspartate 82 acts as the Proton donor in catalysis. Positions 83, 104, 134, and 180 each coordinate Zn(2+). Glycine 181 serves as a coordination point for dihydroxyacetone phosphate. Histidine 210 contacts Zn(2+). Residues 211-213 (GAS) and 253-256 (NTDT) contribute to the dihydroxyacetone phosphate site.

Belongs to the class II fructose-bisphosphate aldolase family. In terms of assembly, homodimer. It depends on Zn(2+) as a cofactor.

The enzyme catalyses beta-D-fructose 1,6-bisphosphate = D-glyceraldehyde 3-phosphate + dihydroxyacetone phosphate. It participates in carbohydrate degradation; glycolysis; D-glyceraldehyde 3-phosphate and glycerone phosphate from D-glucose: step 4/4. Functionally, catalyzes the aldol condensation of dihydroxyacetone phosphate (DHAP or glycerone-phosphate) with glyceraldehyde 3-phosphate (G3P) to form fructose 1,6-bisphosphate (FBP) in gluconeogenesis and the reverse reaction in glycolysis. The protein is Fructose-bisphosphate aldolase (fba) of Helicobacter pylori (strain J99 / ATCC 700824) (Campylobacter pylori J99).